A 435-amino-acid polypeptide reads, in one-letter code: Xylose isomerase (435 aa).

Active-site residues include H100 and D103. Mg(2+)-binding residues include E231, E267, H270, D295, D306, D308, and D338.

It belongs to the xylose isomerase family. Homotetramer. Mg(2+) is required as a cofactor.

The protein localises to the cytoplasm. It carries out the reaction alpha-D-xylose = alpha-D-xylulofuranose. This chain is Xylose isomerase, found in Brucella canis (strain ATCC 23365 / NCTC 10854 / RM-666).